The sequence spans 286 residues: Tyrosine recombinase Tlet_1492 (286 aa).

Residues 1 to 86 enclose the Core-binding (CB) domain; the sequence is MERILQNFSD…SLRSFFNYLQ (86 aa). A Tyr recombinase domain is found at 107-280; the sequence is RIPDFLLPSE…VDQEKFDAIN (174 aa). Catalysis depends on residues arginine 143, lysine 168, histidine 232, arginine 235, and histidine 258. Tyrosine 267 acts as the O-(3'-phospho-DNA)-tyrosine intermediate in catalysis.

Belongs to the 'phage' integrase family.

Its subcellular location is the cytoplasm. Its function is as follows. Site-specific tyrosine recombinase, which acts by catalyzing the cutting and rejoining of the recombining DNA molecules. The sequence is that of Tyrosine recombinase Tlet_1492 from Pseudothermotoga lettingae (strain ATCC BAA-301 / DSM 14385 / NBRC 107922 / TMO) (Thermotoga lettingae).